Consider the following 247-residue polypeptide: 5'-nucleotidase SurE (247 aa).

Residues Asp-8, Asp-9, Ser-39, and Asn-91 each coordinate a divalent metal cation.

The protein belongs to the SurE nucleotidase family. A divalent metal cation is required as a cofactor.

It localises to the cytoplasm. It carries out the reaction a ribonucleoside 5'-phosphate + H2O = a ribonucleoside + phosphate. Functionally, nucleotidase that shows phosphatase activity on nucleoside 5'-monophosphates. The polypeptide is 5'-nucleotidase SurE (Methylobacillus flagellatus (strain ATCC 51484 / DSM 6875 / VKM B-1610 / KT)).